Reading from the N-terminus, the 257-residue chain is Dihydroorotate dehydrogenase B (NAD(+)), electron transfer subunit (257 aa).

The 101-residue stretch at isoleucine 2 to leucine 102 folds into the FAD-binding FR-type domain. Residues arginine 53–serine 56, isoleucine 70–arginine 72, and glycine 77–threonine 78 each bind FAD. Positions 221, 226, 229, and 244 each coordinate [2Fe-2S] cluster.

Belongs to the PyrK family. Heterotetramer of 2 PyrK and 2 PyrD type B subunits. The cofactor is [2Fe-2S] cluster. It depends on FAD as a cofactor.

It participates in pyrimidine metabolism; UMP biosynthesis via de novo pathway; orotate from (S)-dihydroorotate (NAD(+) route): step 1/1. Functionally, responsible for channeling the electrons from the oxidation of dihydroorotate from the FMN redox center in the PyrD type B subunit to the ultimate electron acceptor NAD(+). This is Dihydroorotate dehydrogenase B (NAD(+)), electron transfer subunit from Geobacillus kaustophilus (strain HTA426).